A 257-amino-acid chain; its full sequence is 1-(5-phosphoribosyl)-5-[(5-phosphoribosylamino)methylideneamino] imidazole-4-carboxamide isomerase (257 aa).

Aspartate 8 functions as the Proton acceptor in the catalytic mechanism. Catalysis depends on aspartate 129, which acts as the Proton donor.

It belongs to the HisA/HisF family.

It localises to the cytoplasm. The enzyme catalyses 1-(5-phospho-beta-D-ribosyl)-5-[(5-phospho-beta-D-ribosylamino)methylideneamino]imidazole-4-carboxamide = 5-[(5-phospho-1-deoxy-D-ribulos-1-ylimino)methylamino]-1-(5-phospho-beta-D-ribosyl)imidazole-4-carboxamide. It functions in the pathway amino-acid biosynthesis; L-histidine biosynthesis; L-histidine from 5-phospho-alpha-D-ribose 1-diphosphate: step 4/9. The chain is 1-(5-phosphoribosyl)-5-[(5-phosphoribosylamino)methylideneamino] imidazole-4-carboxamide isomerase from Acaryochloris marina (strain MBIC 11017).